A 329-amino-acid polypeptide reads, in one-letter code: Putative glucose-6-phosphate 1-epimerase (329 aa).

A compositionally biased stretch (low complexity) spans 1 to 13 (MAAPAPAGAAASP). Residues 1–20 (MAAPAPAGAAASPSPKPQLP) form a disordered region. Positions 82, 100, and 105 each coordinate substrate. Histidine 183 is a catalytic residue. A substrate-binding site is contributed by aspartate 228. Glutamate 287 is a catalytic residue.

Belongs to the glucose-6-phosphate 1-epimerase family.

It carries out the reaction alpha-D-glucose 6-phosphate = beta-D-glucose 6-phosphate. The chain is Putative glucose-6-phosphate 1-epimerase from Cenchrus ciliaris (Buffelgrass).